Consider the following 185-residue polypeptide: Adenylyl-sulfate kinase (185 aa).

ATP is bound at residue 13-20 (GLSGAGKT). Catalysis depends on S87, which acts as the Phosphoserine intermediate.

This sequence belongs to the APS kinase family.

The catalysed reaction is adenosine 5'-phosphosulfate + ATP = 3'-phosphoadenylyl sulfate + ADP + H(+). The protein operates within sulfur metabolism; hydrogen sulfide biosynthesis; sulfite from sulfate: step 2/3. Functionally, catalyzes the synthesis of activated sulfate. The sequence is that of Adenylyl-sulfate kinase from Halothermothrix orenii (strain H 168 / OCM 544 / DSM 9562).